The chain runs to 149 residues: 18 kDa antigen 1 (149 aa).

Residues 21–131 (TAARPAVMPM…KPRKIAVGRG (111 aa)) enclose the sHSP domain.

Belongs to the small heat shock protein (HSP20) family.

Its function is as follows. Not known. This protein is one of the major immune reactive proteins in mycobacteria. The protein is 18 kDa antigen 1 of Mycobacterium intracellulare.